The sequence spans 643 residues: MRLSDVSHPNQLHGLTTAQLEDVACQIRERHLQVVSTSGGHLGPGLGVVELTLALYQTLDLDHDKVVWDVGHQAYPHKLLTGRYGDFDSLRQQNGVAGYLKRSESSFDHFGAGHASTSISAALGMALARDRQGKDYKCVAVIGDGALTGGMALEAINHAGHLPSTPFLVVLNDNDMSISPPVGALSTHLNRMRHSAPIQFISDSVQEGVRNIPFIGKEIPQEIKSLTGSVKRLAVPKVGAVFEELGFTYMGPVDGHDIAQMTRTFQAAHRIGGPVLVHVATTKGKGYPYAEADQVGYHAQSAFDLTTGKSIPSKTPKPPSYSKVFGQTLVKICEQNSKVVGITAAMATGTGLDLLQKAIPDQYIDVGIAEQHAVTLAAGMACDGLRPVCAIYSTFLQRAFDQLIHDVGIQNLPVTFVMDRAGIVGADGPTHQGQYDISYLRSIPNFTVMAPKDEAELQRMLVTCLSHDGPTALRIPRGPGEGVTLMEEGWDPLKIGRGEILSEGSDLLIIAYGSMVAPAQKTALCLKESGISATVINARFLRPLDQGLIHPLARRIGKVVTMEEGTLLGGFGSAIVESFADQDIAVSTYRIGIPDKLVHHASPQQSKEELGLTPTAMADNIKKRFGWDNSDSLFVKNSNTSTI.

Thiamine diphosphate contacts are provided by residues H72 and 113 to 115; that span reads GHA. D144 lines the Mg(2+) pocket. Thiamine diphosphate is bound by residues 145-146, N174, Y287, and E370; that span reads GA. N174 contacts Mg(2+).

The protein belongs to the transketolase family. DXPS subfamily. In terms of assembly, homodimer. Mg(2+) is required as a cofactor. Thiamine diphosphate serves as cofactor.

It carries out the reaction D-glyceraldehyde 3-phosphate + pyruvate + H(+) = 1-deoxy-D-xylulose 5-phosphate + CO2. It functions in the pathway metabolic intermediate biosynthesis; 1-deoxy-D-xylulose 5-phosphate biosynthesis; 1-deoxy-D-xylulose 5-phosphate from D-glyceraldehyde 3-phosphate and pyruvate: step 1/1. Its function is as follows. Catalyzes the acyloin condensation reaction between C atoms 2 and 3 of pyruvate and glyceraldehyde 3-phosphate to yield 1-deoxy-D-xylulose-5-phosphate (DXP). The sequence is that of 1-deoxy-D-xylulose-5-phosphate synthase from Prochlorococcus marinus (strain SARG / CCMP1375 / SS120).